Here is a 630-residue protein sequence, read N- to C-terminus: Chaperone protein HtpG (630 aa).

Residues 1–339 (MKGQETRGFQ…SNDLPLNVSR (339 aa)) form an a; substrate-binding region. Residues 340-555 (EILQDNSITR…VDEMSTQMAK (216 aa)) form a b region. A c region spans residues 556-630 (LFAAAGQQVP…MNQLLLSEKA (75 aa)).

This sequence belongs to the heat shock protein 90 family. Homodimer.

The protein resides in the cytoplasm. Molecular chaperone. Has ATPase activity. This chain is Chaperone protein HtpG, found in Photorhabdus laumondii subsp. laumondii (strain DSM 15139 / CIP 105565 / TT01) (Photorhabdus luminescens subsp. laumondii).